A 349-amino-acid chain; its full sequence is Desmethyl-yatein O-methyltransferase (349 aa).

S-adenosyl-L-homocysteine is bound by residues glycine 193, aspartate 216, aspartate 236, methionine 237, methionine 249, and lysine 250. The active-site Proton acceptor is histidine 254. Active-site residues include glutamate 282 and glutamate 314.

The protein belongs to the class I-like SAM-binding methyltransferase superfamily. Cation-independent O-methyltransferase family. COMT subfamily. In terms of assembly, homodimer. Mostly expressed in stems, and, to a lower extent, in leaves.

The enzyme catalyses (-)-5'-demethylyatein + S-adenosyl-L-methionine = (-)-yatein + S-adenosyl-L-homocysteine + H(+). Its pathway is aromatic compound metabolism; phenylpropanoid biosynthesis. In terms of biological role, O-methyltransferase involved in the biosynthesis of etoposide, a chemotherapeutic compound of the topoisomerase inhibitor family. Catalyzes the methylation of (-)-5'-demethylyatein to produce (-)-yatein. This is Desmethyl-yatein O-methyltransferase from Sinopodophyllum hexandrum (Himalayan may apple).